We begin with the raw amino-acid sequence, 638 residues long: Zinc finger and BTB domain-containing protein 22 (638 aa).

The 65-residue stretch at 57–121 (CDVSIRVQGR…AYTGRLSMAA (65 aa)) folds into the BTB domain. Disordered regions lie at residues 171 to 223 (CASV…STSQ), 229 to 248 (SAAGSGNRRDGGPVFPAPVV), 335 to 354 (DDEDEEMGGGSGVPAGGEPE), and 367 to 451 (EPAD…HGAV). Over residues 189-210 (SVRSHTSSRASENQSPSSSNYF) the composition is skewed to polar residues. Phosphoserine is present on serine 203. The C2H2-type 1; atypical zinc finger occupies 483 to 504 (FLCHCGKAFSHKSMRDRHVNMH). C2H2-type zinc fingers lie at residues 510 to 532 (FDCPVCNKKFKMKHHLTEHMKTH) and 538 to 559 (YECSVCAKKFMWRDSFMRHRGH). A disordered region spans residues 564 to 638 (HRMGVGGVGS…DFSGGGGAAH (75 aa)).

This sequence belongs to the krueppel C2H2-type zinc-finger protein family.

The protein resides in the nucleus. May be involved in transcriptional regulation. The polypeptide is Zinc finger and BTB domain-containing protein 22 (Zbtb22) (Mus musculus (Mouse)).